Consider the following 127-residue polypeptide: Photosystem II extrinsic protein U (127 aa).

Positions 1 to 31 (MSRLFRRLSTLLLCSLLVLGVWLTQPLSVQA) are cleaved as a signal peptide.

Belongs to the PsbU family. As to quaternary structure, PSII is composed of 1 copy each of membrane proteins PsbA, PsbB, PsbC, PsbD, PsbE, PsbF, PsbH, PsbI, PsbJ, PsbK, PsbL, PsbM, PsbT, PsbX, PsbY, PsbZ, Psb30/Ycf12, peripheral proteins PsbO, CyanoQ (PsbQ), PsbU, PsbV and a large number of cofactors. It forms dimeric complexes.

The protein resides in the cellular thylakoid membrane. Its function is as follows. One of the extrinsic, lumenal subunits of photosystem II (PSII). PSII is a light-driven water plastoquinone oxidoreductase, using light energy to abstract electrons from H(2)O, generating a proton gradient subsequently used for ATP formation. The extrinsic proteins stabilize the structure of photosystem II oxygen-evolving complex (OEC), the ion environment of oxygen evolution and protect the OEC against heat-induced inactivation. The sequence is that of Photosystem II extrinsic protein U from Synechococcus sp. (strain RCC307).